The primary structure comprises 491 residues: MTLEWNIDDKFHLFFRKKRSVYIVGGVHHDEDEVDPKVVAQSGLQGDDGVVRLPPLNTLVNFLGHVSPYMHADYAFLHREWEYNRTASFADDLVNLPSVYDWRYVYPRDDEETKRKKRYIMPPDNQYLCGSCWAVSTASAIGDAYVVAGLVDWRPDISPAWALTCYPQGQCEGGSPALLLKEISQGNGIVSNHCLDYSFCASNPRCNGAAANHFGAENLSELVPKSCGCYVGDSMHYRYTVDPLIRTLAIGVGTVTEENIQSTIKRHILTHGPVLAGYFVLKNFTSGYFTRINGGVYFDRGNYIPGQALVFNDHYCSGDSYRGSHAVAIIGWGVARNVLYDTDKRGDVPYWYCRNSWRSTWGGDDGYFKMAMYPWNRVAQFEKLVTLRDRDNVPHRCGGIITFTVSTKPVKVKMNQLNTTLLPFPLLRDRSWYGGDQEEYRPAIVPKLAPSDGPNKPPLPLPVYYSALDLALLVLPALLIVIVVLIGKIPT.

Residues Cys132, His325, and Asn355 contribute to the active site. Residues 467-487 (ALDLALLVLPALLIVIVVLIG) form a helical membrane-spanning segment.

This sequence belongs to the peptidase C1 family.

The protein resides in the membrane. Its function is as follows. Probable cysteine protease. The chain is Probable cysteine proteinase 024R from Invertebrate iridescent virus 3 (IIV-3).